The sequence spans 567 residues: Type 2 DNA topoisomerase 6 subunit B (567 aa).

ATP contacts are provided by residues N46, D78, T99–K100, G109–S116, and K472.

Belongs to the TOP6B family. In terms of assembly, homodimer. Heterotetramer of two Top6A and two Top6B chains.

The catalysed reaction is ATP-dependent breakage, passage and rejoining of double-stranded DNA.. In terms of biological role, relaxes both positive and negative superturns and exhibits a strong decatenase activity. The protein is Type 2 DNA topoisomerase 6 subunit B of Thermococcus kodakarensis (strain ATCC BAA-918 / JCM 12380 / KOD1) (Pyrococcus kodakaraensis (strain KOD1)).